Here is a 267-residue protein sequence, read N- to C-terminus: Hydroxyethylthiazole kinase (267 aa).

Met46 contacts substrate. ATP is bound by residues Arg122 and Ser168. Residue Gly195 participates in substrate binding.

This sequence belongs to the Thz kinase family. Mg(2+) is required as a cofactor.

The catalysed reaction is 5-(2-hydroxyethyl)-4-methylthiazole + ATP = 4-methyl-5-(2-phosphooxyethyl)-thiazole + ADP + H(+). It functions in the pathway cofactor biosynthesis; thiamine diphosphate biosynthesis; 4-methyl-5-(2-phosphoethyl)-thiazole from 5-(2-hydroxyethyl)-4-methylthiazole: step 1/1. Its function is as follows. Catalyzes the phosphorylation of the hydroxyl group of 4-methyl-5-beta-hydroxyethylthiazole (THZ). The polypeptide is Hydroxyethylthiazole kinase (Nitratidesulfovibrio vulgaris (strain DP4) (Desulfovibrio vulgaris)).